A 657-amino-acid chain; its full sequence is tRNA 5-methylaminomethyl-2-thiouridine biosynthesis bifunctional protein MnmC (657 aa).

Residues 1-238 (MPASTLLQHA…KWEVMSGEYT (238 aa)) are tRNA (mnm(5)s(2)U34)-methyltransferase. The FAD-dependent cmnm(5)s(2)U34 oxidoreductase stretch occupies residues 265-657 (IGAGLAGSAS…FGLRRLIRGK (393 aa)).

The protein in the N-terminal section; belongs to the methyltransferase superfamily. tRNA (mnm(5)s(2)U34)-methyltransferase family. It in the C-terminal section; belongs to the DAO family. FAD serves as cofactor.

It is found in the cytoplasm. It catalyses the reaction 5-aminomethyl-2-thiouridine(34) in tRNA + S-adenosyl-L-methionine = 5-methylaminomethyl-2-thiouridine(34) in tRNA + S-adenosyl-L-homocysteine + H(+). Catalyzes the last two steps in the biosynthesis of 5-methylaminomethyl-2-thiouridine (mnm(5)s(2)U) at the wobble position (U34) in tRNA. Catalyzes the FAD-dependent demodification of cmnm(5)s(2)U34 to nm(5)s(2)U34, followed by the transfer of a methyl group from S-adenosyl-L-methionine to nm(5)s(2)U34, to form mnm(5)s(2)U34. This chain is tRNA 5-methylaminomethyl-2-thiouridine biosynthesis bifunctional protein MnmC, found in Pseudomonas putida (strain W619).